The primary structure comprises 445 residues: N-succinylarginine dihydrolase (445 aa).

Residues 19-28, N110, and 137-138 each bind substrate; these read AGLSFGNVAS and HR. The active site involves E174. R214 is a substrate binding site. H250 is an active-site residue. Substrate is bound by residues D252 and N363. C369 serves as the catalytic Nucleophile.

It belongs to the succinylarginine dihydrolase family. In terms of assembly, homodimer.

The enzyme catalyses N(2)-succinyl-L-arginine + 2 H2O + 2 H(+) = N(2)-succinyl-L-ornithine + 2 NH4(+) + CO2. Its pathway is amino-acid degradation; L-arginine degradation via AST pathway; L-glutamate and succinate from L-arginine: step 2/5. Catalyzes the hydrolysis of N(2)-succinylarginine into N(2)-succinylornithine, ammonia and CO(2). This chain is N-succinylarginine dihydrolase, found in Shewanella halifaxensis (strain HAW-EB4).